The sequence spans 305 residues: UDP-N-acetylenolpyruvoylglucosamine reductase (305 aa).

The FAD-binding PCMH-type domain occupies 22 to 190 (KVGGAADFFA…LSARFRLQAG (169 aa)). Arg-169 is an active-site residue. The Proton donor role is filled by Ser-220. Glu-290 is an active-site residue.

It belongs to the MurB family. It depends on FAD as a cofactor.

It localises to the cytoplasm. It carries out the reaction UDP-N-acetyl-alpha-D-muramate + NADP(+) = UDP-N-acetyl-3-O-(1-carboxyvinyl)-alpha-D-glucosamine + NADPH + H(+). It participates in cell wall biogenesis; peptidoglycan biosynthesis. Cell wall formation. This Synechococcus sp. (strain RCC307) protein is UDP-N-acetylenolpyruvoylglucosamine reductase.